A 706-amino-acid polypeptide reads, in one-letter code: Transcription factor 12 (706 aa).

The tract at residues 25 to 109 (AMFSPPVNSG…TPFMNSNLIG (85 aa)) is disordered. Polar residues-rich tracts occupy residues 30–48 (PVNSGKTRPTTLGSSQFSG) and 56–76 (GTTSWGTSGQPSPSYDSSRGF). A phosphoserine mark is found at S47, S67, and S79. Positions 81–93 (HYSDHLNDSRLGT) are enriched in basic and acidic residues. S98 carries the phosphoserine modification. A Glycyl lysine isopeptide (Lys-Gly) (interchain with G-Cter in SUMO2) cross-link involves residue K110. 2 positions are modified to phosphoserine: S116 and S124. The leucine-zipper stretch occupies residues 119–140 (LYSRDSGLSGCQSSLLRQDLGL). 2 disordered regions span residues 140–222 (LGSP…SMFA) and 249–313 (FGGI…ASHT). Over residues 144-163 (AQLSSSGKPGTPYYSFSATS) the composition is skewed to polar residues. K181 participates in a covalent cross-link: Glycyl lysine isopeptide (Lys-Gly) (interchain with G-Cter in SUMO2). The short motif at 181–188 (KKVRKVPP) is the Nuclear localization signal element. Residues 256–269 (STSHMSQSSSYGSL) show a composition bias toward low complexity. The segment covering 282–306 (VSPTDINTSLPPMSSFHRGSTSSSP) has biased composition (polar residues). Phosphothreonine is present on T313. Position 333 is a phosphoserine (S333). Disordered regions lie at residues 349–392 (PDHT…YENS) and 520–604 (HKTP…ERRM). Residues 352-363 (TSSSFPSNPSTP) are compositionally biased toward low complexity. Polar residues-rich tracts occupy residues 364-376 (VGSPSPLTGTSQW) and 383-392 (APSSPSYENS). A Phosphoserine modification is found at S392. Composition is skewed to basic and acidic residues over residues 542–554 (IKTENKEKDENLH) and 560–575 (DDMKSDDESSQKDIKV). Residue K543 forms a Glycyl lysine isopeptide (Lys-Gly) (interchain with G-Cter in SUMO2) linkage. The residue at position 564 (S564) is a Phosphoserine. Residue K574 forms a Glycyl lysine isopeptide (Lys-Gly) (interchain with G-Cter in SUMO2) linkage. Position 581 is a phosphothreonine (T581). S582 and S583 each carry phosphoserine. Positions 592 to 604 (PEQKIEREKERRM) are enriched in basic and acidic residues. Residues 601–654 (ERRMANNARERLRVRDINEAFKELGRMCQLHLKSEKPQTKLLILHQAVAVILSL) enclose the bHLH domain. Glycyl lysine isopeptide (Lys-Gly) (interchain with G-Cter in SUMO2) cross-links involve residues K633 and K677. Residues 656–679 (QQVRERNLNPKAACLKRREEEKVS) form a class A specific domain region. Residues 674 to 706 (EEEKVSAASAEPPNTLPGAHPGLSESTNPMGHL) form a disordered region. Residues 697-706 (SESTNPMGHL) are compositionally biased toward polar residues.

As to quaternary structure, efficient DNA binding requires dimerization with another bHLH protein. Forms homo- or heterooligomers with myogenin, E12 and ITF2 proteins and RUNX1T1. Interacts with PTF1A. Interacts with NEUROD2. Interacts with BHLHA9. Widely expressed.

It localises to the nucleus. Functionally, transcriptional regulator. Involved in the initiation of neuronal differentiation. Activates transcription by binding to the E box (5'-CANNTG-3'). May be involved in the functional network that regulates the development of the GnRH axis. The polypeptide is Transcription factor 12 (Tcf12) (Mus musculus (Mouse)).